The chain runs to 169 residues: Peptide deformylase (169 aa).

Residues Cys-94 and His-136 each contribute to the Fe cation site. The active site involves Glu-137. His-140 is a binding site for Fe cation.

The protein belongs to the polypeptide deformylase family. Fe(2+) is required as a cofactor.

The enzyme catalyses N-terminal N-formyl-L-methionyl-[peptide] + H2O = N-terminal L-methionyl-[peptide] + formate. Functionally, removes the formyl group from the N-terminal Met of newly synthesized proteins. Requires at least a dipeptide for an efficient rate of reaction. N-terminal L-methionine is a prerequisite for activity but the enzyme has broad specificity at other positions. The chain is Peptide deformylase from Desulfotalea psychrophila (strain LSv54 / DSM 12343).